The chain runs to 652 residues: Probable potassium transport system protein Kup (652 aa).

Positions M1–S20 are enriched in low complexity. The disordered stretch occupies residues M1–H26. 12 consecutive transmembrane segments (helical) span residues L36–L56, L76–I96, W125–P145, P161–I181, F193–I213, A228–L248, L270–L290, L314–F334, I362–F382, A391–V411, A419–S439, and I444–T464.

Belongs to the HAK/KUP transporter (TC 2.A.72) family.

The protein resides in the cell inner membrane. The catalysed reaction is K(+)(in) + H(+)(in) = K(+)(out) + H(+)(out). Transport of potassium into the cell. Likely operates as a K(+):H(+) symporter. This is Probable potassium transport system protein Kup from Zymomonas mobilis subsp. mobilis (strain ATCC 31821 / ZM4 / CP4).